The primary structure comprises 186 residues: Peptidyl-tRNA hydrolase (186 aa).

Tyr-14 is a tRNA binding site. His-19 acts as the Proton acceptor in catalysis. Positions 64, 66, and 112 each coordinate tRNA.

It belongs to the PTH family. As to quaternary structure, monomer.

The protein resides in the cytoplasm. It catalyses the reaction an N-acyl-L-alpha-aminoacyl-tRNA + H2O = an N-acyl-L-amino acid + a tRNA + H(+). In terms of biological role, hydrolyzes ribosome-free peptidyl-tRNAs (with 1 or more amino acids incorporated), which drop off the ribosome during protein synthesis, or as a result of ribosome stalling. Catalyzes the release of premature peptidyl moieties from peptidyl-tRNA molecules trapped in stalled 50S ribosomal subunits, and thus maintains levels of free tRNAs and 50S ribosomes. In Anaplasma marginale (strain St. Maries), this protein is Peptidyl-tRNA hydrolase.